The following is a 216-amino-acid chain: Uracil phosphoribosyltransferase (216 aa).

5-phospho-alpha-D-ribose 1-diphosphate contacts are provided by residues Arg81, Arg106, and Asp135 to Ser143. Uracil contacts are provided by residues Ile200 and Gly205–Ala207. A 5-phospho-alpha-D-ribose 1-diphosphate-binding site is contributed by Asp206.

The protein belongs to the UPRTase family. The cofactor is Mg(2+).

The enzyme catalyses UMP + diphosphate = 5-phospho-alpha-D-ribose 1-diphosphate + uracil. It participates in pyrimidine metabolism; UMP biosynthesis via salvage pathway; UMP from uracil: step 1/1. Its activity is regulated as follows. Allosterically activated by GTP. Its function is as follows. Catalyzes the conversion of uracil and 5-phospho-alpha-D-ribose 1-diphosphate (PRPP) to UMP and diphosphate. The polypeptide is Uracil phosphoribosyltransferase (upp) (Porphyromonas gingivalis (strain ATCC 33277 / DSM 20709 / CIP 103683 / JCM 12257 / NCTC 11834 / 2561)).